A 227-amino-acid chain; its full sequence is PKHD-type hydroxylase Dtpsy_0528 (227 aa).

The Fe2OG dioxygenase domain maps to 78–178 (TIYPPKFNRY…RVASFFWIES (101 aa)). 3 residues coordinate Fe cation: His-96, Asp-98, and His-159. Arg-169 lines the 2-oxoglutarate pocket.

Requires Fe(2+) as cofactor. L-ascorbate is required as a cofactor.

This is PKHD-type hydroxylase Dtpsy_0528 from Acidovorax ebreus (strain TPSY) (Diaphorobacter sp. (strain TPSY)).